Here is a 316-residue protein sequence, read N- to C-terminus: N-acetyl-gamma-glutamyl-phosphate reductase (316 aa).

Residue cysteine 136 is part of the active site.

It belongs to the NAGSA dehydrogenase family. Type 1 subfamily.

The protein localises to the cytoplasm. The catalysed reaction is N-acetyl-L-glutamate 5-semialdehyde + phosphate + NADP(+) = N-acetyl-L-glutamyl 5-phosphate + NADPH + H(+). The protein operates within amino-acid biosynthesis; L-arginine biosynthesis; N(2)-acetyl-L-ornithine from L-glutamate: step 3/4. Functionally, catalyzes the NADPH-dependent reduction of N-acetyl-5-glutamyl phosphate to yield N-acetyl-L-glutamate 5-semialdehyde. In Xanthomonas campestris pv. campestris (strain B100), this protein is N-acetyl-gamma-glutamyl-phosphate reductase.